The sequence spans 955 residues: MEEFVIPVYSEDEIPYALLSRYPLAIQTNVKIEDVEGKHNVVKIPESDMIDIPKLTIVEAMNYKPARNDGIVVPRLLDITLRAYDDRKSTKSARGIEFMTNARWMKWAIDDRMDIQPLKVTLDHYCSVNHQLFNCVVKANAANADTIYYDYFPLEDYKKRCNHTNLDLLRSLTNMELFHALQGAAYSIKSSYELVAYSERGSLEETYVVGQPKWIHLTRGTRIGNSGLSYERFISSMVQVSVNGKIPDEIANEIAQLNRIRAEWITATYDRGRIRALELCSILSTIGRKMLNTHEEPKDEMDLSTRFQFKLDEKFNRADSEHVNIFGVRGPATDEGRFYALIAIAATDTQKGRVWRTNPYPCLRGALVAAECELGDVYSTLRRVYTWSLRPEYGQHERQLENNKYVFNRINLFDSNLAVGDQIIHWRYEVKASAETTYDSGYMCRHEAEEDELLCKINEDKYKEMLDRMIQGGWDQERFKLHNILTDPNLLTIDFEKDAYLNSRSELVLPDYFDKWISSPMFNARLRITKGEIGTSKKDDPWNNRAVRGYIKPLAESLDFVLGPYYDLRLLFFDETLSLKQEQSAVFQYLSQLDDFPALTQLRGDAVCPHSGGALYTFRKVALFLIGNYEKLSPDLHEGMEHQRYVHPSTGGTYQKRVLEMKDSCQLTCFVIDYIFEKREQLRDTKEARYIVYLIQSLTGTQRLSVLRSTFPNFFQRLLMLKEIKFVRDLNVINFLPLMFLVHDNISYWHRQWSIPMVLFDDTIKLIPVEVGAYANRFGFKSFMNFTRFHPGELKKKQIAEDIHKEFGVVAFEYYTNTKISQGNVHTPVMTTKMDVLRVHLSSLCAGLADSVVYTLPVAHPKKCIVLIIVGDDKLEPHTRSEQIVSRYNYSRKHICGIVSVTIGQNSQLRVHTSGIVKHRVCDKFILKHKCKVILVRMPGYVFGNDELMTKLLNV.

The protein belongs to the orbivirus VP2 family.

Its subcellular location is the virion. The VP2 protein is one of the two proteins (with VP5) which constitute the virus particle outer capsid. It is the major target of the host immunogenic response. Responsible for viral attachment to target host cell, probably by binding to sialic acid. This attachment induces virion internalization predominantly through clathrin-dependent endocytosis. In Antilocapra americana (Pronghorn), this protein is Outer capsid protein VP2 (Segment-2).